A 535-amino-acid chain; its full sequence is Probable galacturonosyltransferase 12 (535 aa).

Residues 1–37 (MQLHISPSLRHVTVVTGKGLREFIKVKVGSRRFSYQM) are Cytoplasmic-facing. Residues 38–58 (VFYSLLFFTFLLRFVFVLSTV) form a helical; Signal-anchor for type II membrane protein membrane-spanning segment. The Lumenal segment spans residues 59 to 535 (DTIDGDPSPC…FIKSCHIRAS (477 aa)). N-linked (GlcNAc...) asparagine glycans are attached at residues N397 and N430.

The protein belongs to the glycosyltransferase 8 family. In terms of tissue distribution, highly expressed in stems. Detected in roots, inflorescences, siliques, and leaves. Expressed in cells undergoing secondary wall thickening, including interfascicular fibers and primary and secondary xylem.

The protein resides in the golgi apparatus membrane. It participates in glycan metabolism; pectin biosynthesis. In terms of biological role, involved in pectin assembly and/or distribution, and in the synthesis of secondary wall glucuronoxylan. Probably involved in the synthesis of the glycosyl sequence at the glucuronoxylan reducing end. May be involved in synthesis of a complex glycan primer for xylan synthesis. The sequence is that of Probable galacturonosyltransferase 12 (GAUT12) from Arabidopsis thaliana (Mouse-ear cress).